Reading from the N-terminus, the 1081-residue chain is Carbamoyl phosphate synthase large chain (1081 aa).

The segment at 1-403 (MPRRNDLNKI…SFQKALRSLE (403 aa)) is carboxyphosphate synthetic domain. ATP is bound by residues arginine 129, arginine 170, glycine 177, lysine 209, leucine 211, glutamate 216, glycine 242, valine 243, histidine 244, glutamine 286, and glutamate 300. One can recognise an ATP-grasp 1 domain in the interval 133–329 (KEAMARIGVP…IAKFAAKLAV (197 aa)). Positions 286, 300, and 302 each coordinate Mg(2+). The Mn(2+) site is built by glutamine 286, glutamate 300, and asparagine 302. Positions 404-553 (TGRFGFGCDR…STYEPEECEV (150 aa)) are oligomerization domain. The segment at 554–944 (LPSDKPKVMI…AFAKAELGAG (391 aa)) is carbamoyl phosphate synthetic domain. An ATP-grasp 2 domain is found at 686-878 (EKILHELEIS…LAKIASLVMS (193 aa)). Positions 722, 761, 763, 768, 794, 795, 796, 797, 837, and 849 each coordinate ATP. Residues glutamine 837, glutamate 849, and asparagine 851 each coordinate Mg(2+). The Mn(2+) site is built by glutamine 837, glutamate 849, and asparagine 851. In terms of domain architecture, MGS-like spans 945 to 1081 (VILATTGTVF…DVKALQDYLG (137 aa)). Positions 945–1081 (VILATTGTVF…DVKALQDYLG (137 aa)) are allosteric domain.

This sequence belongs to the CarB family. Composed of two chains; the small (or glutamine) chain promotes the hydrolysis of glutamine to ammonia, which is used by the large (or ammonia) chain to synthesize carbamoyl phosphate. Tetramer of heterodimers (alpha,beta)4. Mg(2+) is required as a cofactor. It depends on Mn(2+) as a cofactor.

The enzyme catalyses hydrogencarbonate + L-glutamine + 2 ATP + H2O = carbamoyl phosphate + L-glutamate + 2 ADP + phosphate + 2 H(+). It carries out the reaction hydrogencarbonate + NH4(+) + 2 ATP = carbamoyl phosphate + 2 ADP + phosphate + 2 H(+). The protein operates within amino-acid biosynthesis; L-arginine biosynthesis; carbamoyl phosphate from bicarbonate: step 1/1. Its pathway is pyrimidine metabolism; UMP biosynthesis via de novo pathway; (S)-dihydroorotate from bicarbonate: step 1/3. Large subunit of the glutamine-dependent carbamoyl phosphate synthetase (CPSase). CPSase catalyzes the formation of carbamoyl phosphate from the ammonia moiety of glutamine, carbonate, and phosphate donated by ATP, constituting the first step of 2 biosynthetic pathways, one leading to arginine and/or urea and the other to pyrimidine nucleotides. The large subunit (synthetase) binds the substrates ammonia (free or transferred from glutamine from the small subunit), hydrogencarbonate and ATP and carries out an ATP-coupled ligase reaction, activating hydrogencarbonate by forming carboxy phosphate which reacts with ammonia to form carbamoyl phosphate. In Synechocystis sp. (strain ATCC 27184 / PCC 6803 / Kazusa), this protein is Carbamoyl phosphate synthase large chain.